The following is a 60-amino-acid chain: Disagregin (60 aa).

A Cell attachment site; atypical motif is present at residues 14 to 16 (RED).

In terms of tissue distribution, expressed in salivary glands.

Its subcellular location is the secreted. Functionally, tick salivary platelet aggregation inhibitor that plays an important part in the anti-hemostatic strategy of ticks. Inhibits fibrinogen interaction with platelets. Acts by binding (in a divalent metal ion dependent manner) to the glycoprotein IIb-IIIa receptor (ITGA2B/ITGB3) on the platelet surface and inhibits aggregation induced by ADP (IC(50)=99-104 nM), thrombin, collagen (IC(50)=64 nM) platelet-activating factor and collagen. Interacts to unstimulated platelets (Kd=42.5 nM) and to ADP-stimulated platelets (Kd=39.4 nM). In contrast to many disintegrins which only interact with the beta-3 subunit, interacts with the two subunits (alpha-IIb and beta-3). Under flow conditions, reduces and delays platelet adhesion, aggregation, and fibrin formation. The protein is Disagregin of Ornithodoros moubata (Soft tick).